A 578-amino-acid polypeptide reads, in one-letter code: Arginine--tRNA ligase (578 aa).

Positions 127–137 (PNLAKEMHVGH) match the 'HIGH' region motif.

The protein belongs to the class-I aminoacyl-tRNA synthetase family. Monomer.

It localises to the cytoplasm. The enzyme catalyses tRNA(Arg) + L-arginine + ATP = L-arginyl-tRNA(Arg) + AMP + diphosphate. The chain is Arginine--tRNA ligase from Pseudomonas fluorescens (strain SBW25).